The following is a 548-amino-acid chain: Probable nuclear hormone receptor HR3 (548 aa).

The interval 1–27 is disordered; sequence MNNNQFHELFGSQWPPDQHGGHSSAST. Positions 101–176 form a DNA-binding region, nuclear receptor; it reads IIPCKVCGDK…LGMSRDAVKF (76 aa). NR C4-type zinc fingers lie at residues 104-124 and 140-164; these read CKVCGDKSSGVHYGVITCEGC and CPRNKACVVDRVNRNRCQYCRLQKC. A disordered region spans residues 198–228; the sequence is MRAQNDAAPDSVYDAQQQTPSSSDQFHGHYN. Over residues 211-222 the composition is skewed to polar residues; that stretch reads DAQQQTPSSSDQ. In terms of domain architecture, NR LBD spans 295–539; the sequence is ISKVLVKSLA…PALYKELFSL (245 aa).

The protein belongs to the nuclear hormone receptor family. NR1 subfamily.

The protein localises to the nucleus. Putative receptor whose ligand is not yet known. The polypeptide is Probable nuclear hormone receptor HR3 (HR3) (Manduca sexta (Tobacco hawkmoth)).